A 160-amino-acid chain; its full sequence is Endoribonuclease YbeY (160 aa).

Zn(2+)-binding residues include H111, H115, and H121.

The protein belongs to the endoribonuclease YbeY family. Zn(2+) serves as cofactor.

The protein localises to the cytoplasm. Its function is as follows. Single strand-specific metallo-endoribonuclease involved in late-stage 70S ribosome quality control and in maturation of the 3' terminus of the 16S rRNA. This is Endoribonuclease YbeY from Stutzerimonas stutzeri (strain A1501) (Pseudomonas stutzeri).